The chain runs to 570 residues: Sulfite reductase [NADPH] hemoprotein beta-component (570 aa).

4 residues coordinate [4Fe-4S] cluster: Cys-434, Cys-440, Cys-479, and Cys-483. Cys-483 is a binding site for siroheme.

This sequence belongs to the nitrite and sulfite reductase 4Fe-4S domain family. As to quaternary structure, alpha(8)-beta(8). The alpha component is a flavoprotein, the beta component is a hemoprotein. Siroheme is required as a cofactor. Requires [4Fe-4S] cluster as cofactor.

The catalysed reaction is hydrogen sulfide + 3 NADP(+) + 3 H2O = sulfite + 3 NADPH + 4 H(+). Its pathway is sulfur metabolism; hydrogen sulfide biosynthesis; hydrogen sulfide from sulfite (NADPH route): step 1/1. Its function is as follows. Component of the sulfite reductase complex that catalyzes the 6-electron reduction of sulfite to sulfide. This is one of several activities required for the biosynthesis of L-cysteine from sulfate. This is Sulfite reductase [NADPH] hemoprotein beta-component from Escherichia coli O17:K52:H18 (strain UMN026 / ExPEC).